The primary structure comprises 116 residues: Non-specific lipid-transfer protein AP10 (116 aa).

A signal peptide spans 1–26 (MKGTSMGVAILAMIVMAQLMVHPSVA). 4 cysteine pairs are disulfide-bonded: cysteine 29–cysteine 76, cysteine 39–cysteine 53, cysteine 54–cysteine 98, and cysteine 74–cysteine 112.

Belongs to the plant LTP family. As to expression, in germinating seeds, detected in the entire surface of the cotyledons, shoot meristem, inter-cotyledon space, primary xylem and immature vascular elements (at protein level). Expressed in seeds, but not the aerial parts of the plant.

It is found in the secreted. Its subcellular location is the extracellular space. The protein localises to the membrane. In terms of biological role, plant non-specific lipid-transfer proteins transfer phospholipids as well as galactolipids across membranes. May play a role in wax or cutin deposition in the cell walls of expanding epidermal cells and certain secretory tissues. Permeabilizes the membrane of fungal spores, inhibits germination of the spores of the fungus F.solani at a concentration of 40 ug/ml. Inhibits the growth of F.solani with an IC(50) of 6.5 ug/ml, weakly inhibits the growth of the fungus A.alternata. Binds oleoyl-CoA. This is Non-specific lipid-transfer protein AP10 from Helianthus annuus (Common sunflower).